The sequence spans 122 residues: Sterile alpha motif domain-containing protein 13 (122 aa).

Positions 51 to 119 constitute an SAM domain; sequence WAVMDVVNYF…KPLQTKHLKN (69 aa).

This chain is Sterile alpha motif domain-containing protein 13 (SAMD13), found in Homo sapiens (Human).